A 512-amino-acid polypeptide reads, in one-letter code: Pantothenate transporter FEN2 (512 aa).

The Cytoplasmic portion of the chain corresponds to 1 to 27 (MMKESKSITQHEVERESVSSKRAIKKR). Residues 28–48 (LLLFKIDLFVLSFVCLQYWIN) form a helical membrane-spanning segment. Residues 49–79 (YVDRVGFTNAYISGMKEDLKMVGNDLTVSNT) lie on the Extracellular side of the membrane. The helical transmembrane segment at 80-100 (VFMIGYIVGMVPNNLMLLCVP) threads the bilayer. Residues 101–102 (PR) lie on the Cytoplasmic side of the membrane. The chain crosses the membrane as a helical span at residues 103–123 (IWLSFCTFAWGLLTLGMYKVT). Topologically, residues 124–132 (SFKHICAIR) are extracellular. A helical transmembrane segment spans residues 133–153 (FFQALFESCTFSGTHFVLGSW). The Cytoplasmic segment spans residues 154–164 (YKEDELPIRSA). Residues 165-185 (IFTGSGLVGSMFSGFMQTSIF) form a helical membrane-spanning segment. The Extracellular portion of the chain corresponds to 186-198 (THLNGRNGLAGWR). The helical transmembrane segment at 199–219 (WLFIIDFCITLPIAIYGFIFF) threads the bilayer. Residues 220–271 (PGLPDQTSAVSKFSMTRYIFNEQELHYARRRLPARDESTRLDWSTIPRVLKR) lie on the Cytoplasmic side of the membrane. Residues 272–292 (WHWWMFSLVWVLGGENLGFAS) traverse the membrane as a helical segment. Residues 293–312 (NSTFALWLQNQKYTLAQRNN) lie on the Extracellular side of the membrane. Residues 313–333 (YPSGIFAVGIVSTLCSAVYMS) form a helical membrane-spanning segment. Topologically, residues 334–342 (KIPRARHWH) are cytoplasmic. Residues 343-363 (VSVFISLVMVIVAVLIRADPL) form a helical membrane-spanning segment. At 364-372 (NPKVVFSAQ) the chain is on the extracellular side. The helical transmembrane segment at 373–393 (YLGGVAYAGQAVFFSWANIIC) threads the bilayer. Residues 394 to 401 (HADLQERA) lie on the Cytoplasmic side of the membrane. Residues 402–422 (IVLASMNMFSGAVNAWWSILF) form a helical membrane-spanning segment. Over 423–434 (FASDMVPKFERG) the chain is Extracellular. The chain crosses the membrane as a helical span at residues 435–455 (CYALLATAISSGIVSVVIRSL). The Cytoplasmic portion of the chain corresponds to 456–512 (QIKENLSKKQVPYIDANDMPGEDDDDDNQDNENDGDDESMEVELHNEEMAEISNPFR). Residues 468–512 (YIDANDMPGEDDDDDNQDNENDGDDESMEVELHNEEMAEISNPFR) are disordered. Positions 475 to 496 (PGEDDDDDNQDNENDGDDESME) are enriched in acidic residues.

It belongs to the major facilitator superfamily. Allantoate permease family.

Its subcellular location is the cell membrane. Its function is as follows. Transports pantothenate into the cell. Also involved in the catabolite repression-mediated regulation of ergosterol biosynthesis and in fenpropimorph resistance. This Saccharomyces cerevisiae (strain ATCC 204508 / S288c) (Baker's yeast) protein is Pantothenate transporter FEN2 (FEN2).